Here is a 595-residue protein sequence, read N- to C-terminus: Putative terpenoid synthase 16 (595 aa).

4 residues coordinate Mg(2+): Asp-349, Asp-353, Asn-494, and Asp-502. Positions 349-353 (DDTCD) match the DDXXD motif motif.

Belongs to the terpene synthase family. Tpsa subfamily. The cofactor is Mg(2+). Requires Mn(2+) as cofactor.

Its subcellular location is the cytoplasm. Its pathway is secondary metabolite biosynthesis; terpenoid biosynthesis. This Arabidopsis thaliana (Mouse-ear cress) protein is Putative terpenoid synthase 16 (TPS16).